Here is an 832-residue protein sequence, read N- to C-terminus: Cadherin-17 (832 aa).

The signal sequence occupies residues 1–22 (MILQAHLHSLCLLMLYLATGYG). At 23 to 787 (QEGKFSGPLK…HQTGIPTVGM (765 aa)) the chain is on the extracellular side. 7 Cadherin domains span residues 30 to 128 (PLKP…TFLQ), 129 to 244 (SKYE…APKP), 245 to 340 (VEMV…PPTC), 341 to 449 (PSPV…IPIF), 450 to 566 (EKSD…APQF), 567 to 667 (SQHV…PPRL), and 668 to 777 (AKDY…RPAG). N-linked (GlcNAc...) asparagine glycans are attached at residues Asn-149, Asn-184, Asn-250, Asn-419, Asn-456, Asn-546, Asn-587, and Asn-722. A helical transmembrane segment spans residues 788–808 (AVGILLTTLLVIGIILAVVFI). The Cytoplasmic segment spans residues 809–832 (RIKKDKGKDNVESAQASEVKPLRS).

In terms of tissue distribution, expressed in the gastrointestinal tract and pancreatic duct. Not detected in kidney, lung, liver, brain, adrenal gland and skin.

It is found in the cell membrane. Functionally, cadherins are calcium-dependent cell adhesion proteins. They preferentially interact with themselves in a homophilic manner in connecting cells; cadherins may thus contribute to the sorting of heterogeneous cell types. LI-cadherin may have a role in the morphological organization of liver and intestine. Involved in intestinal peptide transport. The sequence is that of Cadherin-17 (CDH17) from Homo sapiens (Human).